A 42-amino-acid polypeptide reads, in one-letter code: uncharacterized protein (42 aa).

The helical transmembrane segment at 10-30 (VANWVTVILMALAGYAVLALA) threads the bilayer.

The protein resides in the host membrane. This is an uncharacterized protein from Acinetobacter calcoaceticus (Arthrobacter siderocapsulatus).